The sequence spans 308 residues: tRNA dimethylallyltransferase (308 aa).

Residue 17-24 (GPTGSGKS) participates in ATP binding. 19–24 (TGSGKS) contributes to the substrate binding site.

This sequence belongs to the IPP transferase family. Monomer. It depends on Mg(2+) as a cofactor.

It carries out the reaction adenosine(37) in tRNA + dimethylallyl diphosphate = N(6)-dimethylallyladenosine(37) in tRNA + diphosphate. In terms of biological role, catalyzes the transfer of a dimethylallyl group onto the adenine at position 37 in tRNAs that read codons beginning with uridine, leading to the formation of N6-(dimethylallyl)adenosine (i(6)A). This is tRNA dimethylallyltransferase from Paenarthrobacter aurescens (strain TC1).